Reading from the N-terminus, the 290-residue chain is UPF0761 membrane protein ASA_4118 (290 aa).

Helical transmembrane passes span 48–68 (LLSL…FPVF), 104–124 (NTTA…ISAI), 144–164 (FAMY…SIAI), 182–202 (IGYL…FLLV), 216–236 (AFIG…GFAI), and 250–270 (ALAT…VVLL).

The protein belongs to the UPF0761 family.

The protein localises to the cell inner membrane. This chain is UPF0761 membrane protein ASA_4118, found in Aeromonas salmonicida (strain A449).